We begin with the raw amino-acid sequence, 87 residues long: UPF0250 protein ETA_23570 (87 aa).

The protein belongs to the UPF0250 family.

The chain is UPF0250 protein ETA_23570 from Erwinia tasmaniensis (strain DSM 17950 / CFBP 7177 / CIP 109463 / NCPPB 4357 / Et1/99).